The following is a 328-amino-acid chain: Transcription factor bHLH25 (328 aa).

The segment at 125 to 152 (PHQKSDEFNRKGTKRAQPFSRNQSNAQD) is disordered. The bHLH domain maps to 148–197 (SNAQDHIIAERKRREKLTQRFVALSALVPGLKKMDKASVLGDALKHIKYL).

Homodimer. As to expression, expressed in flowers.

Its subcellular location is the nucleus. The protein is Transcription factor bHLH25 (BHLH25) of Arabidopsis thaliana (Mouse-ear cress).